The sequence spans 362 residues: Heat-inducible transcription repressor HrcA (362 aa).

Belongs to the HrcA family.

Negative regulator of class I heat shock genes (grpE-dnaK-dnaJ and groELS operons). Prevents heat-shock induction of these operons. The polypeptide is Heat-inducible transcription repressor HrcA (Rhodopseudomonas palustris (strain ATCC BAA-98 / CGA009)).